The chain runs to 445 residues: Chromosome partition protein MukF (445 aa).

A leucine-zipper region spans residues 213–241 (LSETSNTLKELQDTLQAAGDELQTQILDI).

The protein belongs to the MukF family. In terms of assembly, interacts, and probably forms a ternary complex, with MukE and MukB via its C-terminal region. The complex formation is stimulated by calcium or magnesium. It is required for an interaction between MukE and MukB.

It localises to the cytoplasm. The protein localises to the nucleoid. In terms of biological role, involved in chromosome condensation, segregation and cell cycle progression. May participate in facilitating chromosome segregation by condensation DNA from both sides of a centrally located replisome during cell division. Not required for mini-F plasmid partitioning. Probably acts via its interaction with MukB and MukE. Overexpression results in anucleate cells. It has a calcium binding activity. In Vibrio vulnificus (strain CMCP6), this protein is Chromosome partition protein MukF.